Consider the following 129-residue polypeptide: 3-aminoacrylate deaminase RutC (129 aa).

Belongs to the RutC family.

It catalyses the reaction (Z)-3-aminoacrylate + H2O + H(+) = 3-oxopropanoate + NH4(+). Involved in pyrimidine catabolism. Catalyzes the deamination of 3-aminoacrylate to malonic semialdehyde, a reaction that can also occur spontaneously. RutC may facilitate the reaction and modulate the metabolic fitness, rather than catalyzing essential functions. The polypeptide is 3-aminoacrylate deaminase RutC (Yersinia enterocolitica serotype O:8 / biotype 1B (strain NCTC 13174 / 8081)).